Here is a 691-residue protein sequence, read N- to C-terminus: MTDNNHYENNESNENSSENSKVDEARAGAFERFTNRKKRFRENAQKNGESSHHEAPSHHKKEHRPNKKPNNHHKQKHAKTRNYAKEELDSNKVEGVTEILHVNERGTLGFHKELKKGVETNNKIQVEHLNPHYKMNLNSKASVKITPLGGLGEIGGNMMVIETPKSAIVIDAGMSFPKEGLFGVDILIPDFSYLHQIKDKIAGIIITHAHEDHIGATPYLFKELQFPLYGTPLSLGLIGSKFDEHGLKKYRSYFKIVEKRCPISVGEFIIEWIHITHSIIDSSALAIQTKAGTIIHTGDFKIDHTPVDNLPTDLYRLAHYGEKGVMLLLSDSTNSHKSGTTPSESTIAPAFDTLFKEAQGRVIMSTFSSNIHRVYQAIQYGIKYNRKIAVIGRSMEKNLDIARELGYIHLPYQSFIEANEVAKYPDNEVLIVTTGSQGETMSALYRMATDEHRHISIKPNDLVIISAKAIPGNEASVSAVLNFLIKKEAKVAYQEFDNIHVSGHAAQEEQKLMLRLIKPKFFLPVHGEYNHVARHKQTAISCGVPEKNIYLMEDGDQVEVGPAFIKKVGTIKSGKSYVDNQSNLSIDTSIVQQREEVASAGVFAATIFVNKNKQALLESSQFSSLGLVGFKDEKHLIKEIQGGLEMLLKSSNAEILNNPKKLEDHTRNFIRKALFKKFRKYPAIICHAHSF.

The interval 1-89 is disordered; the sequence is MTDNNHYENN…TRNYAKEELD (89 aa). The loss of region decreases protein stability, still able to interact with RhpA, but has decreased RNase activity even on ssRNA stretch occupies residues 1–132; that stretch reads MTDNNHYENN…KIQVEHLNPH (132 aa). Residues 10–19 are compositionally biased toward low complexity; that stretch reads NESNENSSEN. Positions 41–57 are enriched in basic and acidic residues; sequence RENAQKNGESSHHEAPS. The segment covering 58 to 82 has biased composition (basic residues); the sequence is HHKKEHRPNKKPNNHHKQKHAKTRN. Lys-134 and Lys-140 each carry N6-acetyllysine. Positions 208, 210, 212, 213, 277, and 299 each coordinate Zn(2+). An N6-acetyllysine mark is found at Lys-323, Lys-337, and Lys-397. 500–504 provides a ligand contact to substrate; that stretch reads HVSGH. An N6-acetyllysine modification is found at Lys-511. His-526 is a Zn(2+) binding site. Lys-547, Lys-634, and Lys-649 each carry N6-acetyllysine.

Belongs to the metallo-beta-lactamase superfamily. RNA-metabolizing metallo-beta-lactamase-like family. Bacterial RNase J subfamily. As to quaternary structure, homodimer. Homotetramer; dimer of homodimers. Interacts with RNA helicase RphA, might be a member of a minimal RNA degradosome complex. Requires Zn(2+) as cofactor. Post-translationally, acetylated on nine lysine residues. Some of the residues are acetylated by multiple different mechanisms. RimL is partially responsible for the acetylation of Lys-323, Lys-397 and Lys-649. HPB8_1270 homolog is partially responsible for the acetylation of Lys-323, Lys-397, Lys-511 and Lys-649. Acetyl-phosphate-mediated non-enzymatic acetylation pathway takes part in the acetylation of Lys-134, Lys-323, Lys-397, Lys-511 and Lys-649. Acetylation of the remaining residues Lys-140, Lys-337, Lys-547 and Lys-634 occurs by a yet undetermined mechanism. Acetylation on a number of these residues is important for growth regulation and proper cell morphology.

The protein resides in the cytoplasm. Catalytic activity is regulated by the balance between homodimers and homotetramers, with homotetramers being the active forms of this enzyme. Acetylation allosterically regulates the homooligomerization state and hence the catalytic activity. An RNase that has 5'-3' exoribonuclease and endoribonuclease activity. Degrades 5'-monophosphorylated ssRNA and dsRNA, considerably more active on ssRNA. Association with RhpA significantly increases the dsRNase activity. Degrades RNA substrate with hairpin structures at both ends with low activity, but presence of RhpA significantly increases the activity on this substrate. Stimulates ATPase activity of RNA helicase RhpA. Involved in stabilization of mRNA but apparently not rRNA. In Helicobacter pylori (strain B128), this protein is Ribonuclease J.